The primary structure comprises 500 residues: NAD(P)H-quinone oxidoreductase chain 4, chloroplastic (500 aa).

Helical transmembrane passes span 4 to 24, 35 to 55, 87 to 107, 113 to 130, 134 to 154, 167 to 187, 211 to 231, 242 to 262, 272 to 292, 305 to 325, 330 to 350, 364 to 384, 386 to 406, 416 to 436, and 463 to 483; these read FPWL…IFFL, YTIF…CYHF, IGPI…AWPV, LFNF…GLFS, LLLF…LLSM, FILY…GIGL, IIFY…IPLH, HYST…YGLV, AHSI…IYAA, IAYS…SITD, GALL…FLAG, MGGI…FSMA, LALP…GIIT, ILIT…SLSM, and FLSI…DFIF.

This sequence belongs to the complex I subunit 4 family.

It is found in the plastid. The protein resides in the chloroplast thylakoid membrane. It carries out the reaction a plastoquinone + NADH + (n+1) H(+)(in) = a plastoquinol + NAD(+) + n H(+)(out). It catalyses the reaction a plastoquinone + NADPH + (n+1) H(+)(in) = a plastoquinol + NADP(+) + n H(+)(out). This is NAD(P)H-quinone oxidoreductase chain 4, chloroplastic from Coffea arabica (Arabian coffee).